Here is a 578-residue protein sequence, read N- to C-terminus: Acyl-CoA ligase AFT1-1 (578 aa).

ATP-binding positions include 210–218 (SSGTSGAQK), 350–355 (QCYGAT), D438, R457, and K554. The interval 281–350 (GVEDLLSIVE…RHHPTWKIKQ (70 aa)) is SBD1. The tract at residues 351–413 (CYGATEAGTA…VSSPSLAIGY (63 aa)) is SBD2. The Peroxisomal targeting signal type 1 motif lies at 576 to 578 (SKI).

It belongs to the ATP-dependent AMP-binding enzyme family.

It is found in the peroxisome. Its pathway is mycotoxin biosynthesis. Functionally, acyl-CoA ligase; part of the gene clusters that mediate the biosynthesis of the host-selective toxins (HSTs) AF-toxins responsible for Alternaria black spot of strawberry disease by the strawberry pathotype. AF-toxin I and III are valine derivatives of 2,3-dyhydroxy-isovaleric acid and 2-hydroxy-isovaleric acid respectively, while AF II is an isoleucine derivative of 2-hydroxy-valeric acid. These derivatives are bound to a 9,10-epoxy-8-hydroxy-9-methyl-decatrienoic acid (EDA) moiety. On cellular level, AF-toxins affect plasma membrane of susceptible cells and cause a sudden increase in loss of K(+) after a few minutes of toxin treatment. The aldo-keto reductase AFTS1 catalyzes the conversion of 2-keto-isovaleric acid (2-KIV) to 2-hydroxy-isovaleric acid (2-HIV) by reduction of its ketone to an alcohol. The acyl-CoA ligase AFT1, the hydrolase AFT2 and the enoyl-CoA hydratases AFT3 and AFT6, but also the polyketide synthase AFT9, the acyl-CoA dehydrogenase AFT10, the cytochrome P450 monooxygenase AFT11 and the oxidoreductase AFT12 are all involved in the biosynthesis of the AK-, AF- and ACT-toxin common EDA structural moiety. The exact role of each enzyme, and of additional enzymes identified within the AF-toxin clusters have still to be determined. The polypeptide is Acyl-CoA ligase AFT1-1 (Alternaria alternata (Alternaria rot fungus)).